An 82-amino-acid polypeptide reads, in one-letter code: Small ribosomal subunit protein bS18 (82 aa).

Residues 1–24 (MKRTNMKKARMEQSRRPKKNPLKA) form a disordered region.

It belongs to the bacterial ribosomal protein bS18 family. As to quaternary structure, part of the 30S ribosomal subunit. Forms a tight heterodimer with protein bS6.

Binds as a heterodimer with protein bS6 to the central domain of the 16S rRNA, where it helps stabilize the platform of the 30S subunit. The sequence is that of Small ribosomal subunit protein bS18 from Corynebacterium jeikeium (strain K411).